The sequence spans 472 residues: ATP-dependent protease ATPase subunit HslU (472 aa).

Residues Ile20, 62–67 (GVGKTE), Asp285, Glu350, and Arg422 contribute to the ATP site.

It belongs to the ClpX chaperone family. HslU subfamily. In terms of assembly, a double ring-shaped homohexamer of HslV is capped on each side by a ring-shaped HslU homohexamer. The assembly of the HslU/HslV complex is dependent on binding of ATP.

It is found in the cytoplasm. Functionally, ATPase subunit of a proteasome-like degradation complex; this subunit has chaperone activity. The binding of ATP and its subsequent hydrolysis by HslU are essential for unfolding of protein substrates subsequently hydrolyzed by HslV. HslU recognizes the N-terminal part of its protein substrates and unfolds these before they are guided to HslV for hydrolysis. The chain is ATP-dependent protease ATPase subunit HslU from Lactiplantibacillus plantarum (strain ATCC BAA-793 / NCIMB 8826 / WCFS1) (Lactobacillus plantarum).